The primary structure comprises 861 residues: Seed linoleate 9S-lipoxygenase-3 (861 aa).

One can recognise a PLAT domain in the interval 41–166 (QGFDILGSTV…HHKIDRIFFA (126 aa)). The Lipoxygenase domain occupies 169 to 861 (TYLPSETPAP…FRGIPNSISI (693 aa)). The interval 215-257 (NPDSGENHARPVLGGSETYPYPRRGRTGRKPTRKDPNSESRSD) is disordered. The segment covering 237–246 (RRGRTGRKPT) has biased composition (basic residues). Residues 247–257 (RKDPNSESRSD) show a composition bias toward basic and acidic residues. Fe cation contacts are provided by His-522, His-527, His-713, Asn-717, and Ile-861.

Belongs to the lipoxygenase family. It depends on Fe cation as a cofactor.

It localises to the cytoplasm. The catalysed reaction is (9Z,12Z)-octadecadienoate + O2 = (9S)-hydroperoxy-(10E,12Z)-octadecadienoate. It participates in lipid metabolism; oxylipin biosynthesis. Functionally, plant lipoxygenase may be involved in a number of diverse aspects of plant physiology including growth and development, pest resistance, and senescence or responses to wounding. It catalyzes the hydroperoxidation of lipids containing a cis,cis-1,4-pentadiene structure. The polypeptide is Seed linoleate 9S-lipoxygenase-3 (LOX1.3) (Pisum sativum (Garden pea)).